A 202-amino-acid polypeptide reads, in one-letter code: Superoxide dismutase [Mn] (202 aa).

Histidine 27, histidine 82, aspartate 164, and histidine 168 together coordinate Mn(2+).

This sequence belongs to the iron/manganese superoxide dismutase family. Homodimer. The cofactor is Mn(2+).

It catalyses the reaction 2 superoxide + 2 H(+) = H2O2 + O2. Its function is as follows. Destroys superoxide anion radicals which are normally produced within the cells and which are toxic to biological systems. This Listeria monocytogenes serovar 1/2a (strain ATCC BAA-679 / EGD-e) protein is Superoxide dismutase [Mn] (sodA).